Consider the following 562-residue polypeptide: Formate--tetrahydrofolate ligase (562 aa).

71 to 78 (TPAGEGKS) contributes to the ATP binding site.

Belongs to the formate--tetrahydrofolate ligase family.

The enzyme catalyses (6S)-5,6,7,8-tetrahydrofolate + formate + ATP = (6R)-10-formyltetrahydrofolate + ADP + phosphate. It functions in the pathway one-carbon metabolism; tetrahydrofolate interconversion. The polypeptide is Formate--tetrahydrofolate ligase (Bacillus cereus (strain ATCC 10987 / NRS 248)).